Reading from the N-terminus, the 282-residue chain is Phosphatidylserine decarboxylase proenzyme (282 aa).

Catalysis depends on charge relay system; for autoendoproteolytic cleavage activity residues Asp88, His144, and Ser247. The active-site Schiff-base intermediate with substrate; via pyruvic acid; for decarboxylase activity is the Ser247. A Pyruvic acid (Ser); by autocatalysis modification is found at Ser247.

This sequence belongs to the phosphatidylserine decarboxylase family. PSD-B subfamily. Prokaryotic type I sub-subfamily. Heterodimer of a large membrane-associated beta subunit and a small pyruvoyl-containing alpha subunit. The cofactor is pyruvate. Is synthesized initially as an inactive proenzyme. Formation of the active enzyme involves a self-maturation process in which the active site pyruvoyl group is generated from an internal serine residue via an autocatalytic post-translational modification. Two non-identical subunits are generated from the proenzyme in this reaction, and the pyruvate is formed at the N-terminus of the alpha chain, which is derived from the carboxyl end of the proenzyme. The autoendoproteolytic cleavage occurs by a canonical serine protease mechanism, in which the side chain hydroxyl group of the serine supplies its oxygen atom to form the C-terminus of the beta chain, while the remainder of the serine residue undergoes an oxidative deamination to produce ammonia and the pyruvoyl prosthetic group on the alpha chain. During this reaction, the Ser that is part of the protease active site of the proenzyme becomes the pyruvoyl prosthetic group, which constitutes an essential element of the active site of the mature decarboxylase.

Its subcellular location is the cell membrane. It carries out the reaction a 1,2-diacyl-sn-glycero-3-phospho-L-serine + H(+) = a 1,2-diacyl-sn-glycero-3-phosphoethanolamine + CO2. Its pathway is phospholipid metabolism; phosphatidylethanolamine biosynthesis; phosphatidylethanolamine from CDP-diacylglycerol: step 2/2. Catalyzes the formation of phosphatidylethanolamine (PtdEtn) from phosphatidylserine (PtdSer). This is Phosphatidylserine decarboxylase proenzyme from Xanthomonas oryzae pv. oryzae (strain MAFF 311018).